The sequence spans 274 residues: Thiamine kinase (274 aa).

The protein belongs to the thiamine kinase family.

The enzyme catalyses thiamine + ATP = thiamine phosphate + ADP + H(+). Its pathway is cofactor biosynthesis; thiamine diphosphate biosynthesis; thiamine phosphate from thiamine: step 1/1. Its function is as follows. Catalyzes the ATP-dependent phosphorylation of thiamine to thiamine phosphate. Is involved in thiamine salvage. This is Thiamine kinase from Escherichia coli O81 (strain ED1a).